We begin with the raw amino-acid sequence, 472 residues long: Sarcalumenin (472 aa).

The first 19 residues, 1–19 (MRALLLFCFVASLLLSGQA), serve as a signal peptide directing secretion. The region spanning 89-330 (ITSKPMVLFL…IENRLENKIA (242 aa)) is the Dynamin-type G domain. Positions 99-106 (GPWSVGKS) are G1 motif. Ser102 carries an N-linked (GlcNAc...) asparagine glycan. The interval 127–128 (EP) is G2 motif. The interval 189–192 (DTPG) is G3 motif. The interval 254 to 257 (NKAD) is G4 motif. Position 277 (Pro277) is a region of interest, G5 motif. N-linked (GlcNAc...) asparagine glycans are attached at residues Asn280 and Asn388.

The protein belongs to the TRAFAC class dynamin-like GTPase superfamily. Dynamin/Fzo/YdjA family. N-glycosylated. Detected in skeletal muscle.

The protein localises to the sarcoplasmic reticulum lumen. The protein resides in the sarcoplasmic reticulum membrane. In Oryctolagus cuniculus (Rabbit), this protein is Sarcalumenin (SRL).